The primary structure comprises 198 residues: Syndecan-4 (198 aa).

The signal sequence occupies residues 1 to 18 (MAPARLFALLLFFVGGVA). Topologically, residues 19–145 (ESIRETEVID…QGSNIFERTE (127 aa)) are extracellular. Residues Ser-39, Ser-61, and Ser-63 are each glycosylated (O-linked (Xyl...) (glycosaminoglycan) serine). A glycan (O-linked (Xyl...) (chondroitin sulfate) serine) is linked at Ser-95. A helical transmembrane segment spans residues 146–170 (VLAALIVGGIVGILFAVFLILLLMY). The Cytoplasmic portion of the chain corresponds to 171 to 198 (RMKKKDEGSYDLGKKPIYKKAPTNEFYA).

It belongs to the syndecan proteoglycan family. Homodimer. Interacts (via its cytoplasmic domain) with GIPC (via its PDZ domain). Interacts (via its cytoplasmic domain) with NUDT16L1. Interacts with CDCP1 and SDCBP. Interacts with DNM2; this interaction is markedly enhanced at focal ahesion site upon induction of focal adhesions and stress-fiber formation. In terms of processing, shedding is enhanced by a number of factors such as heparanase, thrombin or EGF. Also by stress and wound healing. PMA-mediated shedding is inhibited by TIMP3. Post-translationally, O-glycosylated; contains both chondroitin sulfate and heparan sulfate. Ser-39, Ser-61 and Ser-63 can all be modified by either chondroitin sulfate or heparan sulfate, and the protein exists in forms that contain only chondroitin sulfate, only heparan sulfate and both chondroitin sulfate and heparan sulfate. Detected in fibroblasts (at protein level). Also expressed in epithelial cells.

It is found in the membrane. It localises to the secreted. Functionally, cell surface proteoglycan which regulates exosome biogenesis in concert with SDCBP and PDCD6IP. This chain is Syndecan-4, found in Homo sapiens (Human).